The sequence spans 342 residues: AA9 family lytic polysaccharide monooxygenase AA9-X282 (342 aa).

A signal peptide spans 1–18 (MKSFASLLFLAATAAAHA). Position 17 (His17) interacts with Cu(2+). Phosphothreonine occurs at positions 19 and 57. Residue Ser59 is modified to Phosphoserine. An intrachain disulfide couples Cys63 to Cys181. His93 is a Cu(2+) binding site. O2-binding residues include His167 and Gln176. Residue Tyr178 coordinates Cu(2+). The N-linked (GlcNAc...) asparagine glycan is linked to Asn189. Residues 233-263 (SPATVANTPYPTTATWNTALQPTTVPTVTPP) are X282 extension. Residues 281 to 302 (VTSQPPVPPTTQQPPVVTPTAP) are disordered. Residues 285–302 (PPVPPTTQQPPVVTPTAP) show a composition bias toward pro residues. The CBM1 domain maps to 306-342 (PLQTQYGQCGGQGWNGPTQCQPPYTCTASNQWYHQCL).

This sequence belongs to the polysaccharide monooxygenase AA9 family. Cu(2+) serves as cofactor.

It localises to the secreted. It catalyses the reaction [(1-&gt;4)-beta-D-glucosyl]n+m + reduced acceptor + O2 = 4-dehydro-beta-D-glucosyl-[(1-&gt;4)-beta-D-glucosyl]n-1 + [(1-&gt;4)-beta-D-glucosyl]m + acceptor + H2O.. Functionally, lytic polysaccharide monooxygenase (LPMO) that depolymerizes crystalline and amorphous polysaccharides via the oxidation of scissile alpha- or beta-(1-4)-glycosidic bonds, yielding C1 oxidation products. Catalysis by LPMOs requires the reduction of the active-site copper from Cu(II) to Cu(I) by a reducing agent and H(2)O(2) or O(2) as a cosubstrate. Shows only weak binding properties to cellulose, and low cellulolytic oxidative activity which questions the involvement of X282 extension-containing AA9 proteins in the degradation of plant cell wall and opens new avenues as to the divergence of function of some AA9 members. The sequence is that of AA9 family lytic polysaccharide monooxygenase AA9-X282 from Coprinopsis cinerea (strain Okayama-7 / 130 / ATCC MYA-4618 / FGSC 9003) (Inky cap fungus).